Here is a 393-residue protein sequence, read N- to C-terminus: Putative competence-damage inducible protein (393 aa).

This sequence belongs to the CinA family.

This chain is Putative competence-damage inducible protein, found in Streptococcus suis (strain 98HAH33).